A 316-amino-acid polypeptide reads, in one-letter code: Phosphate acyltransferase (316 aa).

The protein belongs to the PlsX family. Homodimer. Probably interacts with PlsY.

It localises to the cytoplasm. The enzyme catalyses a fatty acyl-[ACP] + phosphate = an acyl phosphate + holo-[ACP]. It functions in the pathway lipid metabolism; phospholipid metabolism. Functionally, catalyzes the reversible formation of acyl-phosphate (acyl-PO(4)) from acyl-[acyl-carrier-protein] (acyl-ACP). This enzyme utilizes acyl-ACP as fatty acyl donor, but not acyl-CoA. The sequence is that of Phosphate acyltransferase from Chlamydia caviae (strain ATCC VR-813 / DSM 19441 / 03DC25 / GPIC) (Chlamydophila caviae).